Reading from the N-terminus, the 329-residue chain is GTPase Obg (329 aa).

Positions 1–159 (MQFIDYAEIE…RWLRLELKLL (159 aa)) constitute an Obg domain. An OBG-type G domain is found at 160–328 (AEVGIIGLPN…LLQIVWQLLD (169 aa)). Residues 166–173 (GLPNAGKS), 191–195 (FTTLV), 213–216 (DIPG), 280–283 (NKMD), and 309–311 (SGV) contribute to the GTP site. Mg(2+) contacts are provided by serine 173 and threonine 193.

Belongs to the TRAFAC class OBG-HflX-like GTPase superfamily. OBG GTPase family. As to quaternary structure, monomer. It depends on Mg(2+) as a cofactor.

The protein resides in the cytoplasm. Its function is as follows. An essential GTPase which binds GTP, GDP and possibly (p)ppGpp with moderate affinity, with high nucleotide exchange rates and a fairly low GTP hydrolysis rate. Plays a role in control of the cell cycle, stress response, ribosome biogenesis and in those bacteria that undergo differentiation, in morphogenesis control. The polypeptide is GTPase Obg (Rippkaea orientalis (strain PCC 8801 / RF-1) (Cyanothece sp. (strain PCC 8801))).